We begin with the raw amino-acid sequence, 384 residues long: Tryptophan--tRNA ligase (384 aa).

Positions 81-89 (PSGPMHIGH) match the 'HIGH' region motif. The 'KMSKS' region motif lies at 252–256 (KMSAS).

This sequence belongs to the class-I aminoacyl-tRNA synthetase family.

Its subcellular location is the cytoplasm. It catalyses the reaction tRNA(Trp) + L-tryptophan + ATP = L-tryptophyl-tRNA(Trp) + AMP + diphosphate + H(+). The polypeptide is Tryptophan--tRNA ligase (Thermococcus sibiricus (strain DSM 12597 / MM 739)).